A 167-amino-acid polypeptide reads, in one-letter code: Ureidoglycolate lyase (167 aa).

Belongs to the ureidoglycolate lyase family. As to quaternary structure, homodimer. Ni(2+) serves as cofactor.

It carries out the reaction (S)-ureidoglycolate = urea + glyoxylate. It functions in the pathway nitrogen metabolism; (S)-allantoin degradation. In terms of biological role, catalyzes the catabolism of the allantoin degradation intermediate (S)-ureidoglycolate, generating urea and glyoxylate. Involved in the utilization of allantoin as nitrogen source. The sequence is that of Ureidoglycolate lyase from Pseudomonas entomophila (strain L48).